Reading from the N-terminus, the 85-residue chain is U4-theraphotoxin-Hhn1a (85 aa).

The N-terminal stretch at 1-22 (MKVTLIAILTCAAVLVLHTTAA) is a signal peptide. A propeptide spanning residues 23 to 48 (EELEAESQLMKVGMPDTELAAVDEER) is cleaved from the precursor. 3 disulfide bridges follow: Cys52–Cys66, Cys56–Cys77, and Cys71–Cys82.

It belongs to the neurotoxin 12 (Hwtx-2) family. 02 (Hwtx-2) subfamily. Monomer. In terms of tissue distribution, expressed by the venom gland.

It is found in the secreted. Neurotoxin active on both insects and mammals. The polypeptide is U4-theraphotoxin-Hhn1a (Cyriopagopus hainanus (Chinese bird spider)).